Consider the following 538-residue polypeptide: Hydroxylamine reductase (538 aa).

The [4Fe-4S] cluster site is built by Cys3, Cys6, Cys15, and Cys21. Hybrid [4Fe-2O-2S] cluster contacts are provided by His239, Glu263, Cys307, Cys394, Cys422, Cys447, Glu481, and Lys483. Cys394 carries the post-translational modification Cysteine persulfide.

This sequence belongs to the HCP family. The cofactor is [4Fe-4S] cluster. Hybrid [4Fe-2O-2S] cluster is required as a cofactor.

Its subcellular location is the cytoplasm. The enzyme catalyses A + NH4(+) + H2O = hydroxylamine + AH2 + H(+). Its function is as follows. Catalyzes the reduction of hydroxylamine to form NH(3) and H(2)O. This is Hydroxylamine reductase from Solidesulfovibrio magneticus (strain ATCC 700980 / DSM 13731 / RS-1) (Desulfovibrio magneticus).